Here is a 249-residue protein sequence, read N- to C-terminus: Dof zinc finger protein DOF4.5 (249 aa).

A Dof-type zinc finger spans residues 25-79; it reads RVCARCDSDNTKFCYYNNYCEFQPRYFCKNCRRYWTHGGALRNIPIGGSSRAKRA. The Zn(2+) site is built by Cys27, Cys30, Cys52, and Cys55.

Its subcellular location is the nucleus. Transcription factor that binds specifically to a 5'-AA[AG]G-3' consensus core sequence. This Arabidopsis thaliana (Mouse-ear cress) protein is Dof zinc finger protein DOF4.5 (DOF4.5).